The chain runs to 222 residues: N-(5'-phosphoribosyl)anthranilate isomerase (222 aa).

This sequence belongs to the TrpF family.

It catalyses the reaction N-(5-phospho-beta-D-ribosyl)anthranilate = 1-(2-carboxyphenylamino)-1-deoxy-D-ribulose 5-phosphate. The protein operates within amino-acid biosynthesis; L-tryptophan biosynthesis; L-tryptophan from chorismate: step 3/5. This chain is N-(5'-phosphoribosyl)anthranilate isomerase, found in Rhizobium johnstonii (strain DSM 114642 / LMG 32736 / 3841) (Rhizobium leguminosarum bv. viciae).